The chain runs to 510 residues: Histidine ammonia-lyase (510 aa).

A cross-link (5-imidazolinone (Ala-Gly)) is located at residues 143–145 (ASG). A 2,3-didehydroalanine (Ser) modification is found at S144.

This sequence belongs to the PAL/histidase family. In terms of processing, contains an active site 4-methylidene-imidazol-5-one (MIO), which is formed autocatalytically by cyclization and dehydration of residues Ala-Ser-Gly.

The protein localises to the cytoplasm. It carries out the reaction L-histidine = trans-urocanate + NH4(+). The protein operates within amino-acid degradation; L-histidine degradation into L-glutamate; N-formimidoyl-L-glutamate from L-histidine: step 1/3. The sequence is that of Histidine ammonia-lyase from Yersinia pseudotuberculosis serotype I (strain IP32953).